Consider the following 448-residue polypeptide: Tryptophan dimethylallyltransferase 1 (448 aa).

L-tryptophan is bound by residues 80-81 (IL) and Glu89. Substrate-binding residues include Arg100, Lys186, and Tyr188. L-tryptophan contacts are provided by Tyr190 and Arg249. The substrate site is built by Arg262, Lys264, Tyr266, Gln348, Tyr350, Tyr414, and Tyr418.

It belongs to the tryptophan dimethylallyltransferase family. As to quaternary structure, homodimer.

It catalyses the reaction L-tryptophan + dimethylallyl diphosphate = 4-(3-methylbut-2-enyl)-L-tryptophan + diphosphate. It functions in the pathway alkaloid biosynthesis; ergot alkaloid biosynthesis. Tryptophan dimethylallyltransferase; part of the gene cluster that mediates the biosynthesis of fungal ergot alkaloid. DmaW catalyzes the first step of ergot alkaloid biosynthesis by condensing dimethylallyl diphosphate (DMAP) and tryptophan to form 4-dimethylallyl-L-tryptophan. The second step is catalyzed by the methyltransferase easF that methylates 4-dimethylallyl-L-tryptophan in the presence of S-adenosyl-L-methionine, resulting in the formation of 4-dimethylallyl-L-abrine. The catalase easC and the FAD-dependent oxidoreductase easE then transform 4-dimethylallyl-L-abrine to chanoclavine-I which is further oxidized by easD in the presence of NAD(+), resulting in the formation of chanoclavine-I aldehyde. Agroclavine dehydrogenase easG then mediates the conversion of chanoclavine-I aldehyde to agroclavine via a non-enzymatic adduct reaction: the substrate is an iminium intermediate that is formed spontaneously from chanoclavine-I aldehyde in the presence of glutathione. The presence of easA is not required to complete this reaction. Further conversion of agroclavine to paspalic acid is a two-step process involving oxidation of agroclavine to elymoclavine and of elymoclavine to paspalic acid, the second step being performed by the elymoclavine oxidase cloA. Paspalic acid is then further converted to D-lysergic acid. Ergopeptines are assembled from D-lysergic acid and three different amino acids by the D-lysergyl-peptide-synthetases composed each of a monomudular and a trimodular nonribosomal peptide synthetase subunit. LpsB and lpsC encode the monomodular subunits responsible for D-lysergic acid activation and incorporation into the ergopeptine backbone. LpsA1 and A2 subunits encode the trimodular nonribosomal peptide synthetase assembling the tripeptide portion of ergopeptines. LpsA1 is responsible for formation of the major ergopeptine, ergotamine, and lpsA2 for alpha-ergocryptine, the minor ergopeptine of the total alkaloid mixture elaborated by C.purpurea. D-lysergyl-tripeptides are assembled by the nonribosomal peptide synthetases and released as N-(D-lysergyl-aminoacyl)-lactams. Cyclolization of the D-lysergyl-tripeptides is performed by the Fe(2+)/2-ketoglutarate-dependent dioxygenase easH which introduces a hydroxyl group into N-(D-lysergyl-aminoacyl)-lactam at alpha-C of the aminoacyl residue followed by spontaneous condensation with the terminal lactam carbonyl group. This Claviceps purpurea (Ergot fungus) protein is Tryptophan dimethylallyltransferase 1.